We begin with the raw amino-acid sequence, 468 residues long: Dimethylamine methyltransferase MtbB2 (468 aa).

A non-standard amino acid (pyrrolysine) is located at residue pyrrolysine 356.

The protein belongs to the dimethylamine methyltransferase family.

The enzyme catalyses Co(I)-[dimethylamine-specific corrinoid protein] + dimethylamine + H(+) = methyl-Co(III)-[dimethylamine-specific corrinoid protein] + methylamine. Its pathway is one-carbon metabolism; methanogenesis from dimethylamine. Functionally, catalyzes the transfer of a methyl group from dimethylamine to the corrinoid cofactor of MtbC. This is Dimethylamine methyltransferase MtbB2 (mtbB2) from Methanosarcina acetivorans (strain ATCC 35395 / DSM 2834 / JCM 12185 / C2A).